A 404-amino-acid polypeptide reads, in one-letter code: Acetate kinase (404 aa).

N7 is a Mg(2+) binding site. K14 serves as a coordination point for ATP. R95 contributes to the substrate binding site. The active-site Proton donor/acceptor is D152. Residues 212–216 (HLGNG), 286–288 (DMR), and 334–338 (GIGEN) each bind ATP. Residue E388 participates in Mg(2+) binding.

This sequence belongs to the acetokinase family. Homodimer. Requires Mg(2+) as cofactor. Mn(2+) is required as a cofactor.

It is found in the cytoplasm. The enzyme catalyses acetate + ATP = acetyl phosphate + ADP. Its pathway is metabolic intermediate biosynthesis; acetyl-CoA biosynthesis; acetyl-CoA from acetate: step 1/2. Functionally, catalyzes the formation of acetyl phosphate from acetate and ATP. Can also catalyze the reverse reaction. The protein is Acetate kinase of Nitratidesulfovibrio vulgaris (strain DSM 19637 / Miyazaki F) (Desulfovibrio vulgaris).